The following is a 252-amino-acid chain: Fluoroquinolones export permease protein MT2760 (252 aa).

A run of 6 helical transmembrane segments spans residues 31–51, 69–89, 119–139, 148–168, 176–196, and 224–244; these read VMLVIAPVIWTTGVALLTPLF, LILTAFLLLTSIIVAGALAAF, ATVMVVTTIYVVATMSCSGIL, IPIGLVAGLSAVVTLLLILAV, LAMVRALGMLIAGLPCLPWFI, and TWWPYLVGGAVYNLAIVWVLF.

The complex is composed of 2 ATP-binding proteins and 2 transmembrane proteins.

It localises to the cell membrane. Its function is as follows. Part of the ABC transporter complex involved in fluoroquinolones export. Probably responsible for the translocation of the substrate across the membrane. In Mycobacterium tuberculosis (strain CDC 1551 / Oshkosh), this protein is Fluoroquinolones export permease protein MT2760.